Consider the following 124-residue polypeptide: Glucagon-1 (124 aa).

The first 25 residues, 1 to 25 (MKRIHSLAGILLVLGLIQSSCRVLM), serve as a signal peptide directing secretion. The tract at residues 28–54 (ADPSSSLEADSTLKDEPRELSNMKRHS) is disordered. The span at 38 to 54 (STLKDEPRELSNMKRHS) shows a compositional bias: basic and acidic residues. The propeptide occupies 84–88 (SGVAE).

It belongs to the glucagon family.

The protein localises to the secreted. In terms of biological role, glucagon plays a key role in glucose metabolism and homeostasis. Regulates blood glucose by increasing gluconeogenesis and decreasing glycolysis. The chain is Glucagon-1 (gcg1) from Lophius americanus (American angler).